A 1372-amino-acid chain; its full sequence is Serine protease pic autotransporter (1372 aa).

An N-terminal signal peptide occupies residues 1 to 55 (MNKVYSLKYCPVTGGLIAVSELARRVIKKTCRRLTHILLAGIPAICLCYSQISQA). Positions 56-301 (GIVRSDIAYQ…NVIPTDYLNQ (246 aa)) constitute a Peptidase S6 domain. Residues His127, Asp155, and Ser258 each act as charge relay system in the active site. Residues 1106–1372 (DTNGDAGAWA…AVNANFRYMF (267 aa)) enclose the Autotransporter domain.

Post-translationally, cleaved to release the mature protein from the outer membrane.

It is found in the periplasm. The protein localises to the secreted. The protein resides in the cell surface. Its subcellular location is the cell outer membrane. In terms of biological role, involved in intestinal colonization, displays in vitro mucinolytic activity, serum resistance, and hemagglutination. Important to penetrate the intestinal mucus layer. This is Serine protease pic autotransporter (pic) from Escherichia coli O44:H18 (strain 042 / EAEC).